Consider the following 162-residue polypeptide: MFDRSLNRVNERLNRTLTRNQLLQQATDQTRWQLRVSRVVIYYFYREWKGQVIIESLSQSEFSILGSTGADDCFNGDYAQRYLQGRILQITDIEASDFDPCHLDFLRSIRVRADLVAPIIVDQRLWGLLAAHHHEVRTWLAEEVEFVRQQAQTLAGDLQLMD.

This is an uncharacterized protein from Picosynechococcus sp. (strain ATCC 27264 / PCC 7002 / PR-6) (Agmenellum quadruplicatum).